The following is a 207-amino-acid chain: Ribosomal RNA small subunit methyltransferase G (207 aa).

S-adenosyl-L-methionine is bound by residues G73, L78, V124–E125, and R139.

Belongs to the methyltransferase superfamily. RNA methyltransferase RsmG family.

It localises to the cytoplasm. It catalyses the reaction guanosine(527) in 16S rRNA + S-adenosyl-L-methionine = N(7)-methylguanosine(527) in 16S rRNA + S-adenosyl-L-homocysteine. Its function is as follows. Specifically methylates the N7 position of guanine in position 527 of 16S rRNA. The sequence is that of Ribosomal RNA small subunit methyltransferase G from Klebsiella pneumoniae (strain 342).